Consider the following 694-residue polypeptide: GRB2-associated-binding protein 1 (694 aa).

Residue S2 is modified to N-acetylserine. The PH domain occupies 5-116; it reads EVVCSGWLRK…WVRCICDICG (112 aa). Disordered regions lie at residues 122-164 and 194-231; these read EDPV…PYQL and PEPT…SKHG. The span at 145 to 157 shows a compositional bias: polar residues; that stretch reads APPSTQADSSSAT. Basic and acidic residues predominate over residues 194–203; sequence PEPTRTHADS. The segment covering 204–231 has biased composition (polar residues); that stretch reads AKSTSSETDCNDNVPSHKNPASSQSKHG. Residues S251, S253, S266, and S304 each carry the phosphoserine modification. The tract at residues 323 to 386 is disordered; that stretch reads FPEGTLGQTS…TAGMSPSRSN (64 aa). The span at 362–386 shows a compositional bias: polar residues; sequence IPRTASDTDSSYCIPTAGMSPSRSN. At T387 the chain carries Phosphothreonine. Phosphoserine is present on residues S402 and S454. Disordered stretches follow at residues 493-532 and 544-656; these read AHMG…VKPA and ELQA…ADER. A Phosphoserine modification is found at A547. The span at 594 to 611 shows a compositional bias: polar residues; sequence PNLSSEDPNLFGSNSLDG. Y627 carries the post-translational modification Phosphotyrosine. T638 is modified (phosphothreonine). Phosphoserine is present on S651. Y659 is subject to Phosphotyrosine. The disordered stretch occupies residues 671–694; the sequence is KSTREAWTDGRQSTESETPAKSVK. Basic and acidic residues predominate over residues 672 to 684; the sequence is STREAWTDGRQST. Residue S683 is modified to Phosphoserine. A compositionally biased stretch (polar residues) spans 685–694; that stretch reads ESETPAKSVK.

It belongs to the GAB family. As to quaternary structure, identified in a complex containing FRS2, GRB2, GAB1, PIK3R1 and SOS1. Forms a tripartite complex containing GAB1, METTL13 and SPRY2. Within the complex interacts with METTL13. Interacts with GRB2 and with other SH2-containing proteins. Interacts with phosphorylated LAT2. Interacts with PTPRJ. Interacts (phosphorylated) with PTPN11. Interacts with HCK. In terms of processing, phosphorylated in response to FGFR1 activation. Phosphorylated on tyrosine residue(s) by the epidermal growth factor receptor (EGFR) and the insulin receptor (INSR). Tyrosine phosphorylation of GAB1 mediates interaction with several proteins that contain SH2 domains. Phosphorylated on tyrosine residues by HCK upon IL6 signaling.

In terms of biological role, adapter protein that plays a role in intracellular signaling cascades triggered by activated receptor-type kinases. Plays a role in FGFR1 signaling. Probably involved in signaling by the epidermal growth factor receptor (EGFR) and the insulin receptor (INSR). Involved in the MET/HGF-signaling pathway. The sequence is that of GRB2-associated-binding protein 1 (GAB1) from Homo sapiens (Human).